Reading from the N-terminus, the 61-residue chain is UPF0434 protein PFL_1779 (61 aa).

This sequence belongs to the UPF0434 family.

This chain is UPF0434 protein PFL_1779, found in Pseudomonas fluorescens (strain ATCC BAA-477 / NRRL B-23932 / Pf-5).